Here is a 476-residue protein sequence, read N- to C-terminus: MKVSLPAFEKARVLVVGDVMLDRYWVGPTGRISPEAPVPVVKINQVEDRPGGAANVALNIATLGGQVQLAGLVGQDDTAHALTLGVQTLGVEPQWLTIADKPTITKLRVLSRNQQLIRLDFEEAFDKADSVRLLKQSEALLDSVDVVVLSDYAKGAIDQPRDFIALARAKGVMVLVDPKGSDFGRYQGASLITPNMSEFEAVVGTVTSEADLLEKARGLLKQHHFDAILVTRSEKGMTLVTANAPELHIPTVAREVYDVTGAGDTVISALATSLAAGADLPQACAIANTAAGVVVGKLGTSTVSRIELIEALALHHGESGFGVVSEDQLAYALEQAKLRGERVVMTNGCFDILHAGHVSYLKQAKALGDRLIVAVNDDASVKRLKGDGRPVNQVDRRMAVLAGLASVDWVVPFSEDTPQRIITRLLPNLLVKGGDYKLEDIAGGAEVIAAGGQVQVLGFEDGISTTAIIQNIMANQ.

The segment at M1–S319 is ribokinase. Residue N195–E198 coordinates ATP. The active site involves D264. The interval M345–Q476 is cytidylyltransferase.

It in the N-terminal section; belongs to the carbohydrate kinase PfkB family. This sequence in the C-terminal section; belongs to the cytidylyltransferase family. Homodimer.

The catalysed reaction is D-glycero-beta-D-manno-heptose 7-phosphate + ATP = D-glycero-beta-D-manno-heptose 1,7-bisphosphate + ADP + H(+). It catalyses the reaction D-glycero-beta-D-manno-heptose 1-phosphate + ATP + H(+) = ADP-D-glycero-beta-D-manno-heptose + diphosphate. It participates in nucleotide-sugar biosynthesis; ADP-L-glycero-beta-D-manno-heptose biosynthesis; ADP-L-glycero-beta-D-manno-heptose from D-glycero-beta-D-manno-heptose 7-phosphate: step 1/4. It functions in the pathway nucleotide-sugar biosynthesis; ADP-L-glycero-beta-D-manno-heptose biosynthesis; ADP-L-glycero-beta-D-manno-heptose from D-glycero-beta-D-manno-heptose 7-phosphate: step 3/4. Catalyzes the phosphorylation of D-glycero-D-manno-heptose 7-phosphate at the C-1 position to selectively form D-glycero-beta-D-manno-heptose-1,7-bisphosphate. Its function is as follows. Catalyzes the ADP transfer from ATP to D-glycero-beta-D-manno-heptose 1-phosphate, yielding ADP-D-glycero-beta-D-manno-heptose. In Shewanella baltica (strain OS195), this protein is Bifunctional protein HldE.